A 357-amino-acid polypeptide reads, in one-letter code: 4-hydroxy-2-oxovalerate aldolase (357 aa).

A disordered region spans residues 1–21 (MSQEAARDAAAGRPVQIHDPT). Residues 15–265 (VQIHDPTLRD…RTGIDLYRLL (251 aa)) enclose the Pyruvate carboxyltransferase domain. 23 to 24 (RD) lines the substrate pocket. Asp-24 serves as a coordination point for Mn(2+). Catalysis depends on His-27, which acts as the Proton acceptor. Residues Ser-177 and His-204 each coordinate substrate. Mn(2+)-binding residues include His-204 and His-206.

The protein belongs to the 4-hydroxy-2-oxovalerate aldolase family.

The enzyme catalyses (S)-4-hydroxy-2-oxopentanoate = acetaldehyde + pyruvate. Functionally, involved in the biosynthesis of the peptidyl nucleoside antibiotic nikkomycin. The protein is 4-hydroxy-2-oxovalerate aldolase of Streptomyces tendae.